The chain runs to 150 residues: 3-hydroxyacyl-[acyl-carrier-protein] dehydratase FabZ (150 aa).

His-51 is an active-site residue.

Belongs to the thioester dehydratase family. FabZ subfamily.

It localises to the cytoplasm. It carries out the reaction a (3R)-hydroxyacyl-[ACP] = a (2E)-enoyl-[ACP] + H2O. Functionally, involved in unsaturated fatty acids biosynthesis. Catalyzes the dehydration of short chain beta-hydroxyacyl-ACPs and long chain saturated and unsaturated beta-hydroxyacyl-ACPs. The chain is 3-hydroxyacyl-[acyl-carrier-protein] dehydratase FabZ from Geobacter metallireducens (strain ATCC 53774 / DSM 7210 / GS-15).